The chain runs to 585 residues: Dihydroxy-acid dehydratase, mitochondrial (585 aa).

The transit peptide at 1–20 directs the protein to the mitochondrion; the sequence is MGLLTKVATSRQFSTTRCVA. Position 70 (Cys70) interacts with [2Fe-2S] cluster. Asp102 contributes to the Mg(2+) binding site. Residue Cys143 coordinates [2Fe-2S] cluster. A Mg(2+)-binding site is contributed by Asp144. [2Fe-2S] cluster is bound at residue Cys221. A Mg(2+)-binding site is contributed by Glu474. Ser500 (proton acceptor) is an active-site residue.

The protein belongs to the IlvD/Edd family. [2Fe-2S] cluster is required as a cofactor. Mg(2+) serves as cofactor.

Its subcellular location is the mitochondrion. It carries out the reaction (2R)-2,3-dihydroxy-3-methylbutanoate = 3-methyl-2-oxobutanoate + H2O. The enzyme catalyses (2R,3R)-2,3-dihydroxy-3-methylpentanoate = (S)-3-methyl-2-oxopentanoate + H2O. The protein operates within amino-acid biosynthesis; L-isoleucine biosynthesis; L-isoleucine from 2-oxobutanoate: step 3/4. Its pathway is amino-acid biosynthesis; L-valine biosynthesis; L-valine from pyruvate: step 3/4. Its activity is regulated as follows. Catalytic activity is inactivated under iron-limiting conditions. In terms of biological role, dihydroxyacid dehydratase that catalyzes the third step in the common pathway leading to biosynthesis of branched-chain amino acids. Catalyzes the dehydration of (2R,3R)-2,3-dihydroxy-3-methylpentanoate (2,3-dihydroxy-3-methylvalerate) into 2-oxo-3-methylpentanoate (2-oxo-3-methylvalerate) and of (2R)-2,3-dihydroxy-3-methylbutanoate (2,3-dihydroxyisovalerate) into 2-oxo-3-methylbutanoate (2-oxoisovalerate), the penultimate precursor to L-isoleucine and L-valine, respectively. Required for the synthesis of alpha-isopropylmalate which modulates the activity of LEU3 and subsequently regulates the expression of LEU1. In Saccharomyces cerevisiae (strain ATCC 204508 / S288c) (Baker's yeast), this protein is Dihydroxy-acid dehydratase, mitochondrial.